The primary structure comprises 1372 residues: DNA-directed RNA polymerase subunit beta (1372 aa).

This sequence belongs to the RNA polymerase beta chain family. In terms of assembly, the RNAP catalytic core consists of 2 alpha, 1 beta, 1 beta' and 1 omega subunit. When a sigma factor is associated with the core the holoenzyme is formed, which can initiate transcription.

It catalyses the reaction RNA(n) + a ribonucleoside 5'-triphosphate = RNA(n+1) + diphosphate. Its function is as follows. DNA-dependent RNA polymerase catalyzes the transcription of DNA into RNA using the four ribonucleoside triphosphates as substrates. The polypeptide is DNA-directed RNA polymerase subunit beta (Nitratidesulfovibrio vulgaris (strain DSM 19637 / Miyazaki F) (Desulfovibrio vulgaris)).